The sequence spans 320 residues: ATP-dependent 6-phosphofructokinase (320 aa).

G11 provides a ligand contact to ATP. Position 21-25 (21-25 (RAVVR)) interacts with ADP. Residues 72-73 (RY) and 102-105 (GDGS) contribute to the ATP site. Residue D103 coordinates Mg(2+). 125–127 (TID) lines the substrate pocket. D127 functions as the Proton acceptor in the catalytic mechanism. An ADP-binding site is contributed by R154. Substrate contacts are provided by residues R162 and 169-171 (MGR). ADP contacts are provided by residues 185–187 (GAD), R211, and 213–215 (KKH). Residues E222, R243, and 249-252 (HVVR) each bind substrate.

This sequence belongs to the phosphofructokinase type A (PFKA) family. ATP-dependent PFK group I subfamily. Prokaryotic clade 'B1' sub-subfamily. As to quaternary structure, homotetramer. Mg(2+) is required as a cofactor.

The protein resides in the cytoplasm. It catalyses the reaction beta-D-fructose 6-phosphate + ATP = beta-D-fructose 1,6-bisphosphate + ADP + H(+). The protein operates within carbohydrate degradation; glycolysis; D-glyceraldehyde 3-phosphate and glycerone phosphate from D-glucose: step 3/4. With respect to regulation, allosterically activated by ADP and other diphosphonucleosides, and allosterically inhibited by phosphoenolpyruvate. Its function is as follows. Catalyzes the phosphorylation of D-fructose 6-phosphate to fructose 1,6-bisphosphate by ATP, the first committing step of glycolysis. The polypeptide is ATP-dependent 6-phosphofructokinase (Enterococcus faecalis (strain ATCC 700802 / V583)).